Consider the following 202-residue polypeptide: Cytochrome c oxidase assembly protein CtaG (202 aa).

Topologically, residues 1-14 are cytoplasmic; sequence MSDKAAAPRKQGRN. A helical; Signal-anchor for type II membrane protein membrane pass occupies residues 15-37; the sequence is NGAVVMMCLSFVFGMGAMSYAAV. At 38-202 the chain is on the periplasmic side; the sequence is PLYRIFCQVT…GGTVKIEKKL (165 aa).

Belongs to the COX11/CtaG family.

The protein resides in the cell inner membrane. Exerts its effect at some terminal stage of cytochrome c oxidase synthesis, probably by being involved in the insertion of the copper B into subunit I. In Rhizobium etli (strain ATCC 51251 / DSM 11541 / JCM 21823 / NBRC 15573 / CFN 42), this protein is Cytochrome c oxidase assembly protein CtaG.